The chain runs to 67 residues: LPS-assembly lipoprotein LptM (67 aa).

The N-terminal stretch at 1–19 is a signal peptide; it reads MKNVFKALTVLLTLFSLTG. Cysteine 20 is lipidated: N-palmitoyl cysteine. A lipid anchor (S-diacylglycerol cysteine) is attached at cysteine 20. Residues 26–67 form a disordered region; the sequence is LYFPPADKNAPPPTKPVETQTQSTVPDKNDRATGDGPSQVNY. The segment covering 42–51 has biased composition (polar residues); that stretch reads VETQTQSTVP.

The protein belongs to the LptM family. Interacts with the outer membrane embedded portion of the LPS translocon formed by LptD and LptE (LptDE).

It is found in the cell outer membrane. In terms of biological role, component of the lipopolysaccharide (LPS) transport (Lpt) pathway that promotes efficient assembly of the outer membrane LPS translocon (LptDE) by the BAM complex. Facilitates oxidative maturation of LptD by stabilizing a conformation of the LPS translocon in which LptD can efficiently acquire native disulfide bonds, thereby activating the LPS translocon. This Escherichia coli O157:H7 protein is LPS-assembly lipoprotein LptM.